The sequence spans 1132 residues: Protein sel-1 homolog 3 (1132 aa).

The tract at residues 1 to 24 is disordered; sequence MQRRGAGLGWPRQQQQQPPPLAVG. N-linked (GlcNAc...) asparagine glycans are attached at residues asparagine 201, asparagine 382, and asparagine 527. Sel1-like repeat units lie at residues 575 to 609, 611 to 647, 694 to 730, 732 to 767, 768 to 800, 801 to 839, and 840 to 877; these read YLAV…RLSS, NLGY…DQHT, RLAQ…PALI, DYAI…QAVN, GLGW…DASY, NLGV…EGTL, and WCSL…LGHV. At serine 608 the chain carries Phosphoserine. Asparagine 937 is a glycosylation site (N-linked (GlcNAc...) asparagine). A Sel1-like 8 repeat occupies 952–988; sequence KMGDLYYYGHQNQSQDLELSVQMYAQAALDGDSQGFF. A helical transmembrane segment spans residues 1057–1077; sequence ILHSALIYFLGTFLLSILIAW. Residues 1087–1132 form a disordered region; that stretch reads ASDPPPRPSQASPDTATSTASPAVTPAADASDQDQPTVTNNPEPRG. Residues 1097-1116 are compositionally biased toward low complexity; it reads ASPDTATSTASPAVTPAADA. Polar residues predominate over residues 1119–1132; it reads QDQPTVTNNPEPRG.

The protein localises to the membrane. The protein is Protein sel-1 homolog 3 (SEL1L3) of Homo sapiens (Human).